Reading from the N-terminus, the 184-residue chain is Thymidine kinase (184 aa).

ATP is bound by residues 10-17 (GPMYSGKT) and 83-86 (DEVQ). Glu-84 (proton acceptor) is an active-site residue. Cys-140, Cys-143, Cys-173, and Cys-176 together coordinate Zn(2+).

Belongs to the thymidine kinase family. As to quaternary structure, homotetramer.

The protein localises to the cytoplasm. It catalyses the reaction thymidine + ATP = dTMP + ADP + H(+). The protein is Thymidine kinase of Thermotoga sp. (strain RQ2).